The following is a 282-amino-acid chain: 4-hydroxy-3-methylbut-2-enyl diphosphate reductase (282 aa).

Cys-14 is a [4Fe-4S] cluster binding site. Residues His-43 and His-78 each coordinate (2E)-4-hydroxy-3-methylbut-2-enyl diphosphate. Residues His-43 and His-78 each contribute to the dimethylallyl diphosphate site. Isopentenyl diphosphate-binding residues include His-43 and His-78. Residue Cys-100 coordinates [4Fe-4S] cluster. His-128 serves as a coordination point for (2E)-4-hydroxy-3-methylbut-2-enyl diphosphate. His-128 serves as a coordination point for dimethylallyl diphosphate. His-128 lines the isopentenyl diphosphate pocket. The active-site Proton donor is Glu-130. A (2E)-4-hydroxy-3-methylbut-2-enyl diphosphate-binding site is contributed by Thr-164. Cys-192 provides a ligand contact to [4Fe-4S] cluster. Residues Ser-220, Ser-221, Asn-222, and Ser-266 each contribute to the (2E)-4-hydroxy-3-methylbut-2-enyl diphosphate site. Ser-220, Ser-221, Asn-222, and Ser-266 together coordinate dimethylallyl diphosphate. Residues Ser-220, Ser-221, Asn-222, and Ser-266 each contribute to the isopentenyl diphosphate site.

Belongs to the IspH family. It depends on [4Fe-4S] cluster as a cofactor.

It catalyses the reaction isopentenyl diphosphate + 2 oxidized [2Fe-2S]-[ferredoxin] + H2O = (2E)-4-hydroxy-3-methylbut-2-enyl diphosphate + 2 reduced [2Fe-2S]-[ferredoxin] + 2 H(+). The catalysed reaction is dimethylallyl diphosphate + 2 oxidized [2Fe-2S]-[ferredoxin] + H2O = (2E)-4-hydroxy-3-methylbut-2-enyl diphosphate + 2 reduced [2Fe-2S]-[ferredoxin] + 2 H(+). Its pathway is isoprenoid biosynthesis; dimethylallyl diphosphate biosynthesis; dimethylallyl diphosphate from (2E)-4-hydroxy-3-methylbutenyl diphosphate: step 1/1. The protein operates within isoprenoid biosynthesis; isopentenyl diphosphate biosynthesis via DXP pathway; isopentenyl diphosphate from 1-deoxy-D-xylulose 5-phosphate: step 6/6. Catalyzes the conversion of 1-hydroxy-2-methyl-2-(E)-butenyl 4-diphosphate (HMBPP) into a mixture of isopentenyl diphosphate (IPP) and dimethylallyl diphosphate (DMAPP). Acts in the terminal step of the DOXP/MEP pathway for isoprenoid precursor biosynthesis. This Clostridium perfringens (strain 13 / Type A) protein is 4-hydroxy-3-methylbut-2-enyl diphosphate reductase.